A 101-amino-acid polypeptide reads, in one-letter code: Urease subunit beta (101 aa).

This sequence belongs to the urease beta subunit family. As to quaternary structure, heterotrimer of UreA (gamma), UreB (beta) and UreC (alpha) subunits. Three heterotrimers associate to form the active enzyme.

The protein resides in the cytoplasm. It carries out the reaction urea + 2 H2O + H(+) = hydrogencarbonate + 2 NH4(+). It participates in nitrogen metabolism; urea degradation; CO(2) and NH(3) from urea (urease route): step 1/1. The polypeptide is Urease subunit beta (Burkholderia ambifaria (strain ATCC BAA-244 / DSM 16087 / CCUG 44356 / LMG 19182 / AMMD) (Burkholderia cepacia (strain AMMD))).